We begin with the raw amino-acid sequence, 478 residues long: GTPase Obg (478 aa).

Residues 2–159 (TTFVDRVELH…QDIHLELKTV (158 aa)) enclose the Obg domain. Positions 60–88 (YHHSPHRKATNGKPGEGGNRSGKDGQDLV) are disordered. An OBG-type G domain is found at 160 to 330 (ADVALVGYPS…LSFALAELVA (171 aa)). GTP contacts are provided by residues 166–173 (GYPSAGKS), 191–195 (FTTLV), 212–215 (DVPG), 282–285 (NKID), and 311–313 (SAV). Positions 173 and 193 each coordinate Mg(2+). One can recognise an OCT domain in the interval 348-430 (PKAVDDAGFT…DNAVVFDWEP (83 aa)). The disordered stretch occupies residues 438-478 (MLGRRGEDHRFEAPRPAAQRRRDRDAERDEAQQEFDGFEPF). Composition is skewed to basic and acidic residues over residues 439 to 450 (LGRRGEDHRFEA) and 457 to 468 (RRRDRDAERDEA). Over residues 469 to 478 (QQEFDGFEPF) the composition is skewed to acidic residues.

This sequence belongs to the TRAFAC class OBG-HflX-like GTPase superfamily. OBG GTPase family. As to quaternary structure, monomer. The cofactor is Mg(2+).

It localises to the cytoplasm. It is found in the cell membrane. Plays an unknown essential role and a regulatory role in sporulation. Overexpression suppresses sporulation although cell growth rate was not reduced. Impaired differentiation was eliminated by addition of decoyinine, an inhibitor of GMP synthesis. Overexpression has no effect on undecylprodigiosin production, but decreases actinorhodin production. Functionally, an essential GTPase which binds GTP, GDP and possibly (p)ppGpp with moderate affinity, with high nucleotide exchange rates and a fairly low GTP hydrolysis rate. Plays a role in control of the cell cycle, stress response, ribosome biogenesis and in those bacteria that undergo differentiation, in morphogenesis control. The sequence is that of GTPase Obg from Streptomyces coelicolor (strain ATCC BAA-471 / A3(2) / M145).